Consider the following 36-residue polypeptide: TPLQPKYPGDGAPVEDLIQFYDDLQQYLNVVTRPRF.

The residue at position 36 (phenylalanine 36) is a Phenylalanine amide.

Belongs to the NPY family.

It localises to the secreted. Functionally, hormone secreted by pancreatic cells that acts as a regulator of pancreatic and gastrointestinal functions. The protein is Pancreatic polypeptide (ppy) of Alligator mississippiensis (American alligator).